A 282-amino-acid chain; its full sequence is 4-diphosphocytidyl-2-C-methyl-D-erythritol kinase (282 aa).

The active site involves K13. 96-106 lines the ATP pocket; the sequence is PMGGGIGGGSS. D138 is a catalytic residue.

Belongs to the GHMP kinase family. IspE subfamily.

It carries out the reaction 4-CDP-2-C-methyl-D-erythritol + ATP = 4-CDP-2-C-methyl-D-erythritol 2-phosphate + ADP + H(+). It participates in isoprenoid biosynthesis; isopentenyl diphosphate biosynthesis via DXP pathway; isopentenyl diphosphate from 1-deoxy-D-xylulose 5-phosphate: step 3/6. Functionally, catalyzes the phosphorylation of the position 2 hydroxy group of 4-diphosphocytidyl-2C-methyl-D-erythritol. In Pseudomonas syringae pv. tomato (strain ATCC BAA-871 / DC3000), this protein is 4-diphosphocytidyl-2-C-methyl-D-erythritol kinase.